Consider the following 601-residue polypeptide: Amino-acid acetyltransferase, mitochondrial (601 aa).

Residues 401–558 (FTMDNLIASK…KKKQNNKKKK (158 aa)) enclose the N-acetyltransferase domain.

It belongs to the acetyltransferase family.

It localises to the mitochondrion. It catalyses the reaction L-glutamate + acetyl-CoA = N-acetyl-L-glutamate + CoA + H(+). It participates in amino-acid biosynthesis; L-arginine biosynthesis; N(2)-acetyl-L-ornithine from L-glutamate: step 1/4. Its function is as follows. N-acetylglutamate synthase involved in arginine biosynthesis. This Lodderomyces elongisporus (strain ATCC 11503 / CBS 2605 / JCM 1781 / NBRC 1676 / NRRL YB-4239) (Yeast) protein is Amino-acid acetyltransferase, mitochondrial (ARG2).